The following is a 54-amino-acid chain: ATP synthase protein 8 (54 aa).

Residues 9-29 form a helical membrane-spanning segment; sequence WIINFFIVWTADFTLLIVLSI.

The protein belongs to the ATPase protein 8 family. As to quaternary structure, F-type ATPases have 2 components, CF(1) - the catalytic core - and CF(0) - the membrane proton channel.

It localises to the mitochondrion membrane. Its function is as follows. Mitochondrial membrane ATP synthase (F(1)F(0) ATP synthase or Complex V) produces ATP from ADP in the presence of a proton gradient across the membrane which is generated by electron transport complexes of the respiratory chain. F-type ATPases consist of two structural domains, F(1) - containing the extramembraneous catalytic core and F(0) - containing the membrane proton channel, linked together by a central stalk and a peripheral stalk. During catalysis, ATP synthesis in the catalytic domain of F(1) is coupled via a rotary mechanism of the central stalk subunits to proton translocation. Part of the complex F(0) domain. Minor subunit located with subunit a in the membrane. The sequence is that of ATP synthase protein 8 (MT-ATP8) from Arbacia lixula (Black urchin).